A 293-amino-acid chain; its full sequence is MYKDIATPGRTKEILERYGFSFKKSLGQNFLIDANILRKIVDVADISPDTGAIEIGPGIGALTEQLARRAKKVVAFEIDGRLLPILADTLSPYDNVRIFHQDVLKADLHAVIAEELADVSDRMVVANLPYYVTTPIIMKLLTERLPIRGMVVMLQKEVADRLAAKPGTKDYGSLTIAVQYYTEAEVIMTVPRTVFMPQPNVDSAVIRLVKRQHPPVVVDDEGVFFQVVRASFAQRRKTLFNNLTNNLPGGKENKEQIERVLVALGIDPRRRGETLDIAEFASLSNALAPLFGK.

Positions 29, 31, 56, 77, 102, and 127 each coordinate S-adenosyl-L-methionine.

This sequence belongs to the class I-like SAM-binding methyltransferase superfamily. rRNA adenine N(6)-methyltransferase family. RsmA subfamily.

The protein resides in the cytoplasm. It carries out the reaction adenosine(1518)/adenosine(1519) in 16S rRNA + 4 S-adenosyl-L-methionine = N(6)-dimethyladenosine(1518)/N(6)-dimethyladenosine(1519) in 16S rRNA + 4 S-adenosyl-L-homocysteine + 4 H(+). Functionally, specifically dimethylates two adjacent adenosines (A1518 and A1519) in the loop of a conserved hairpin near the 3'-end of 16S rRNA in the 30S particle. May play a critical role in biogenesis of 30S subunits. This chain is Ribosomal RNA small subunit methyltransferase A, found in Geobacillus kaustophilus (strain HTA426).